We begin with the raw amino-acid sequence, 309 residues long: Carbamate kinase-like protein (309 aa).

A disordered region spans residues 125 to 144 (NKPVGPFYNTEETARSANPN).

It belongs to the carbamate kinase family.

The polypeptide is Carbamate kinase-like protein (Mycoplasma pneumoniae (strain ATCC 29342 / M129 / Subtype 1) (Mycoplasmoides pneumoniae)).